The primary structure comprises 227 residues: AN1-type zinc finger protein 3 (227 aa).

Residues 12-44 (PSLPPRCPCGFWGSSKTMNLCSKCFADFQKKQP) form an A20-type zinc finger. Zn(2+)-binding residues include Cys-18, Cys-20, Cys-32, and Cys-35. 2 disordered regions span residues 41 to 100 (KKQP…EECG) and 113 to 148 (PTKRSCGTDSQSENEASPVKRPRLLENTERSEETSR). Positions 49–59 (APSTSNSQSDL) are enriched in polar residues. Positions 66-77 (SDNNNTSITTPT) are enriched in low complexity. Polar residues-rich tracts occupy residues 78 to 94 (LSPSQQPLPTELNVTSP) and 113 to 127 (PTKRSCGTDSQSENE). Residues 135 to 148 (RLLENTERSEETSR) show a composition bias toward basic and acidic residues. Residues 151-200 (QKSRRRCFQCQTKLELVQQELGSCRCGYVFCMLHRLPEQHDCTFDHMGRG) form an AN1-type zinc finger. Cys-157, Cys-160, Cys-174, Cys-176, Cys-181, His-184, His-190, and Cys-192 together coordinate Zn(2+).

The protein is AN1-type zinc finger protein 3 (ZFAND3) of Homo sapiens (Human).